A 129-amino-acid polypeptide reads, in one-letter code: Lysozyme C, milk isozyme (129 aa).

One can recognise a C-type lysozyme domain in the interval 1 to 129 (KVFSKCELAH…LSEYLASCNL (129 aa)). Intrachain disulfides connect Cys6–Cys127, Cys30–Cys115, Cys65–Cys80, and Cys76–Cys94. Active-site residues include Glu35 and Asp53. The Ca(2+) site is built by Lys82, Asp85, Asn87, Asp90, and Asp91.

It belongs to the glycosyl hydrolase 22 family. In terms of assembly, monomer. Requires Ca(2+) as cofactor.

The catalysed reaction is Hydrolysis of (1-&gt;4)-beta-linkages between N-acetylmuramic acid and N-acetyl-D-glucosamine residues in a peptidoglycan and between N-acetyl-D-glucosamine residues in chitodextrins.. Its function is as follows. Lysozymes have primarily a bacteriolytic function; those in tissues and body fluids are associated with the monocyte-macrophage system and enhance the activity of immunoagents. The chain is Lysozyme C, milk isozyme (LYZ) from Equus caballus (Horse).